The chain runs to 41 residues: Fibrinogen beta chain (41 aa).

The tract at residues 1 to 41 is disordered; that stretch reads ADDYDDEVLPDARGHRPIDRKREELPSLRPAPPPISGGGYR. A Sulfotyrosine modification is found at Tyr-4. Basic and acidic residues predominate over residues 10-26; it reads PDARGHRPIDRKREELP. The segment at 14 to 16 is beta-chain polymerization, binding distal domain of another fibrin; that stretch reads GHR.

Heterohexamer; disulfide linked. Contains 2 sets of 3 non-identical chains (alpha, beta and gamma). The 2 heterotrimers are in head to head conformation with the N-termini in a small central domain. In terms of processing, conversion of fibrinogen to fibrin is triggered by thrombin, which cleaves fibrinopeptides A and B from alpha and beta chains, and thus exposes the N-terminal polymerization sites responsible for the formation of the soft clot.

It is found in the secreted. Cleaved by the protease thrombin to yield monomers which, together with fibrinogen alpha (FGA) and fibrinogen gamma (FGG), polymerize to form an insoluble fibrin matrix. Fibrin has a major function in hemostasis as one of the primary components of blood clots. In addition, functions during the early stages of wound repair to stabilize the lesion and guide cell migration during re-epithelialization. Was originally thought to be essential for platelet aggregation, based on in vitro studies using anticoagulated blood. However subsequent studies have shown that it is not absolutely required for thrombus formation in vivo. Enhances expression of SELP in activated platelets. Maternal fibrinogen is essential for successful pregnancy. Fibrin deposition is also associated with infection, where it protects against IFNG-mediated hemorrhage. May also facilitate the antibacterial immune response via both innate and T-cell mediated pathways. In Oryctolagus cuniculus (Rabbit), this protein is Fibrinogen beta chain (FGB).